Here is a 239-residue protein sequence, read N- to C-terminus: MNLLRYTSKSIQKAIEHRIEHRPDRENLHWNPELVSESPAPDEKALSSSSAARSNPYVARAPTETSDASLKETMESVKGVLGRWGRRVGEAAMKAESLAGNTWQHPLRAAMGRIAQSTKVLAEGGYEKIFRQTFETVPEEQLQNSFACYLSTSAGPVMGVLYVSTAKLAYCSDTSLVVIPLHQLKSVNPSISTVNPAEKYIQVISVDDHEFWFMGFLNYEGAVTSLQDTLQAGASVCVI.

Positions 29–68 (HWNPELVSESPAPDEKALSSSSAARSNPYVARAPTETSDA) are disordered. Positions 128-191 (KIFRQTFETV…HQLKSVNPSI (64 aa)) constitute a GRAM domain.

It belongs to the GEM family.

The chain is Putative GEM-like protein 3 from Arabidopsis thaliana (Mouse-ear cress).